The sequence spans 110 residues: MEIEKTNRMNALFEFYAALLTDKQMNYIELYYADDYSLAEIAEEFGVSRQAVYDNIKRTEKILEDYEMKLHMYSDYIVRSQIFDQILERYPKDDFLQEQIEILTSIDNRE.

This sequence belongs to the UPF0122 family.

Functionally, might take part in the signal recognition particle (SRP) pathway. This is inferred from the conservation of its genetic proximity to ftsY/ffh. May be a regulatory protein. This Streptococcus pneumoniae (strain 70585) protein is UPF0122 protein SP70585_1353.